Here is a 1032-residue protein sequence, read N- to C-terminus: MSFVELHCISNYSFLKGASHPEELVRQAIAQGYEGLAITDECSVAGAVKAWRELRRLRQEAPEASAFKLIIGSEFHYEGNCFVVLAPHKKAYGELCRFITDCRRKADKGDYQFSPDALNENIKQGLLLWRPKQSDQEFIPALTKIFSGRLWLLLELSLSEEDDSERELIQTLSSAYNLPVVSSNGVKMHAPERKRLHDALTAIRFNQSVDSIKDRLAPNAENYLRPLNEIHEIYPSFTIQESLRIAAKCAFELNEIRYQYPKEVVPEGDDPSAYLRRLTYEGAHLRYPQGIPENVLATLEKELNIISELQYEYYFLTIFDIVDYAKKSQILCQGRGSAANSVVCYCLGITAVDPTRASLLFERFISKGRDEPPDIDVDFENARREEVIQYLYRRYGRERCAIAATVITYRPKSAIRDLGKALGVDLLQLESVIANYGWRYRGQDWIDEVITPQVSQDNHILTCFKELLPELLGFPRHLSQHVGGFVLSAGPLVELVPIENAAMEDRTVIQWDKDDLESLGLMKVDVLALGMLTALKKCTTYISEITGKTFSLESIPKEEDSQVYDMLQRADTVGLFQVESRAQMNMLPRLRPEKYYDLVVQVAIVRPGPIHGDMVHPYLRRRHNLEDPDDVPLPELKPILKRTFGVPIFQEQVIAIAIVGAGFTSEEAEELRRSMASWKRRGHMGKLMDKLIINLLKKGVPLEYIQRLCRQIEGFGEYGFPESHAASFALLAYHSGWLKYYYPSAFCCALLNSQPMGFYAPWQVIQDAQRHGVIVLPVDINNSYWEHRLEPHSDNTKEGALRLGFRLVKGLSEEAACSIIQHRTDEGFTSLVQVMHLPKINREDLEALASANALASLGENRYQQRWECSGFLYYYQLFSECEYINIDFEPPSRLDNIYEDHSSTGVVLNDHPLAYLREANLTPQCLTAVELLKQKAGLKTYVAGVVINRQRPKTSTGVTFVTLEDETGSINILVWKKTAIAQMDILVKARLLMVYGELDKDEEGRVAHVLAHRLTDLTPHLEELESRSRDFH.

It belongs to the DNA polymerase type-C family. DnaE2 subfamily.

The protein localises to the cytoplasm. It catalyses the reaction DNA(n) + a 2'-deoxyribonucleoside 5'-triphosphate = DNA(n+1) + diphosphate. Its function is as follows. DNA polymerase involved in damage-induced mutagenesis and translesion synthesis (TLS). It is not the major replicative DNA polymerase. In Hahella chejuensis (strain KCTC 2396), this protein is Error-prone DNA polymerase.